The primary structure comprises 260 residues: Thiazole synthase (260 aa).

The active-site Schiff-base intermediate with DXP is the Lys96. 1-deoxy-D-xylulose 5-phosphate is bound by residues Gly157, 184 to 185 (AG), and 206 to 207 (NT).

The protein belongs to the ThiG family. As to quaternary structure, homotetramer. Forms heterodimers with either ThiH or ThiS.

The protein resides in the cytoplasm. It carries out the reaction [ThiS sulfur-carrier protein]-C-terminal-Gly-aminoethanethioate + 2-iminoacetate + 1-deoxy-D-xylulose 5-phosphate = [ThiS sulfur-carrier protein]-C-terminal Gly-Gly + 2-[(2R,5Z)-2-carboxy-4-methylthiazol-5(2H)-ylidene]ethyl phosphate + 2 H2O + H(+). It participates in cofactor biosynthesis; thiamine diphosphate biosynthesis. Catalyzes the rearrangement of 1-deoxy-D-xylulose 5-phosphate (DXP) to produce the thiazole phosphate moiety of thiamine. Sulfur is provided by the thiocarboxylate moiety of the carrier protein ThiS. In vitro, sulfur can be provided by H(2)S. The polypeptide is Thiazole synthase (Nitrobacter hamburgensis (strain DSM 10229 / NCIMB 13809 / X14)).